The chain runs to 142 residues: Hemoglobin subunit alpha-1 (142 aa).

In terms of domain architecture, Globin spans 2-142 (VLSPADKTNV…VSTVLTSKYR (141 aa)). O2 is bound at residue His59. Heme b is bound at residue His88.

It belongs to the globin family. In terms of assembly, heterotetramer of two alpha chains and two beta chains. In terms of tissue distribution, red blood cells.

Functionally, involved in oxygen transport from the lung to the various peripheral tissues. In terms of biological role, hemopressin acts as an antagonist peptide of the cannabinoid receptor CNR1. Hemopressin-binding efficiently blocks cannabinoid receptor CNR1 and subsequent signaling. The sequence is that of Hemoglobin subunit alpha-1 (HBA1) from Hylobates lar (Lar gibbon).